We begin with the raw amino-acid sequence, 95 residues long: Co-chaperonin GroES (95 aa).

Belongs to the GroES chaperonin family. Heptamer of 7 subunits arranged in a ring. Interacts with the chaperonin GroEL.

The protein localises to the cytoplasm. Its function is as follows. Together with the chaperonin GroEL, plays an essential role in assisting protein folding. The GroEL-GroES system forms a nano-cage that allows encapsulation of the non-native substrate proteins and provides a physical environment optimized to promote and accelerate protein folding. GroES binds to the apical surface of the GroEL ring, thereby capping the opening of the GroEL channel. This chain is Co-chaperonin GroES, found in Rhodobacter capsulatus (Rhodopseudomonas capsulata).